The sequence spans 427 residues: Enolase (427 aa).

Residue glutamine 163 participates in (2R)-2-phosphoglycerate binding. Glutamate 205 functions as the Proton donor in the catalytic mechanism. Aspartate 242, glutamate 285, and aspartate 312 together coordinate Mg(2+). (2R)-2-phosphoglycerate is bound by residues lysine 337, arginine 366, serine 367, and lysine 388. Lysine 337 acts as the Proton acceptor in catalysis.

The protein belongs to the enolase family. Requires Mg(2+) as cofactor.

Its subcellular location is the cytoplasm. The protein localises to the secreted. It localises to the cell surface. It catalyses the reaction (2R)-2-phosphoglycerate = phosphoenolpyruvate + H2O. It participates in carbohydrate degradation; glycolysis; pyruvate from D-glyceraldehyde 3-phosphate: step 4/5. Its function is as follows. Catalyzes the reversible conversion of 2-phosphoglycerate (2-PG) into phosphoenolpyruvate (PEP). It is essential for the degradation of carbohydrates via glycolysis. This Thiobacillus denitrificans (strain ATCC 25259 / T1) protein is Enolase.